We begin with the raw amino-acid sequence, 108 residues long: Nitrogenase-stabilizing/protective protein NifW (108 aa).

This sequence belongs to the NifW family. In terms of assembly, homotrimer; associates with NifD.

In terms of biological role, may protect the nitrogenase Fe-Mo protein from oxidative damage. This chain is Nitrogenase-stabilizing/protective protein NifW, found in Zymomonas mobilis subsp. mobilis (strain ATCC 31821 / ZM4 / CP4).